Consider the following 159-residue polypeptide: ATP synthase subunit b 2 (159 aa).

The helical transmembrane segment at 1 to 21 (MDATFWALIGLIIFLAILAYL) threads the bilayer.

It belongs to the ATPase B chain family. In terms of assembly, F-type ATPases have 2 components, F(1) - the catalytic core - and F(0) - the membrane proton channel. F(1) has five subunits: alpha(3), beta(3), gamma(1), delta(1), epsilon(1). F(0) has three main subunits: a(1), b(2) and c(10-14). The alpha and beta chains form an alternating ring which encloses part of the gamma chain. F(1) is attached to F(0) by a central stalk formed by the gamma and epsilon chains, while a peripheral stalk is formed by the delta and b chains.

The protein localises to the cell inner membrane. Functionally, f(1)F(0) ATP synthase produces ATP from ADP in the presence of a proton or sodium gradient. F-type ATPases consist of two structural domains, F(1) containing the extramembraneous catalytic core and F(0) containing the membrane proton channel, linked together by a central stalk and a peripheral stalk. During catalysis, ATP synthesis in the catalytic domain of F(1) is coupled via a rotary mechanism of the central stalk subunits to proton translocation. In terms of biological role, component of the F(0) channel, it forms part of the peripheral stalk, linking F(1) to F(0). The protein is ATP synthase subunit b 2 of Brucella anthropi (strain ATCC 49188 / DSM 6882 / CCUG 24695 / JCM 21032 / LMG 3331 / NBRC 15819 / NCTC 12168 / Alc 37) (Ochrobactrum anthropi).